Consider the following 223-residue polypeptide: Charged multivesicular body protein 3 (223 aa).

The N-myristoyl glycine moiety is linked to residue Gly2. Positions 2–113 (GLFGKTQEKP…LQKSTEVMKA (112 aa)) are intramolecular interaction with C-terminus. Residues 22–54 (KIRKEMRVVDRQIRDIQREEEKVKRSVKDAAKK) are a coiled coil. Important for autoinhibitory function regions lie at residues 59 to 64 (VCVVLA) and 168 to 169 (IL). A coiled-coil region spans residues 149–223 (ESMDDQEEME…MQSRLATLRS (75 aa)). The intramolecular interaction with N-terminus stretch occupies residues 151–221 (MDDQEEMEEA…EAMQSRLATL (71 aa)). An interaction with VPS4A region spans residues 151–223 (MDDQEEMEEA…MQSRLATLRS (73 aa)). Lys179 is covalently cross-linked (Glycyl lysine isopeptide (Lys-Gly) (interchain with G-Cter in ubiquitin)). The interval 180 to 223 (APSKVTDALPEPEPAGAMAASEGDEEDDEEDLEAMQSRLATLRS) is disordered. Interaction with STAMBP regions lie at residues 196–223 (AMAA…TLRS), 204–208 (EEDDE), and 222–223 (RS). A Phosphoserine modification is found at Ser200. The short motif at 201–212 (EGDEEDDEEDLE) is the MIT-interacting motif element. Acidic residues predominate over residues 201 to 212 (EGDEEDDEEDLE).

The protein belongs to the SNF7 family. As to quaternary structure, probable core component of the endosomal sorting required for transport complex III (ESCRT-III). ESCRT-III components are thought to multimerize to form a flat lattice on the perimeter membrane of the endosome. Several assembly forms of ESCRT-III may exist that interact and act sequentially. Forms a metastable monomer in solution; its core structure (without part of the putative autoinhibitory C-terminal acidic region) oligomerizes into a flat lattice via two different dimerization interfaces. In vitro, heteromerizes with CHMP2A (but not CHMP4) to form helical tubular structures that expose membrane-interacting sites on the outside whereas VPS4B can associate on the inside of the tubule. May interact with IGFBP7; the relevance of such interaction however remains unclear. Interacts with CHMP2A. Interacts with CHMP4A; the interaction requires the release of CHMP4A autoinhibition. Interacts with VPS4A. Interacts with STAMBP; the interaction appears to relieve the autoinhibition of CHMP3. Interacts with VTA1.

It is found in the cytoplasm. The protein resides in the cytosol. The protein localises to the membrane. It localises to the endosome. Its subcellular location is the late endosome membrane. In terms of biological role, probable core component of the endosomal sorting required for transport complex III (ESCRT-III) which is involved in multivesicular bodies (MVBs) formation and sorting of endosomal cargo proteins into MVBs. MVBs contain intraluminal vesicles (ILVs) that are generated by invagination and scission from the limiting membrane of the endosome and mostly are delivered to lysosomes enabling degradation of membrane proteins, such as stimulated growth factor receptors, lysosomal enzymes and lipids. The MVB pathway appears to require the sequential function of ESCRT-O, -I,-II and -III complexes. ESCRT-III proteins mostly dissociate from the invaginating membrane before the ILV is released. The ESCRT machinery also functions in topologically equivalent membrane fission events, such as the terminal stages of cytokinesis. ESCRT-III proteins are believed to mediate the necessary vesicle extrusion and/or membrane fission activities, possibly in conjunction with the AAA ATPase VPS4. Selectively binds to phosphatidylinositol 3,5-bisphosphate PtdIns(3,5)P2 and PtdIns(3,4)P2 in preference to other phosphoinositides tested. Involved in late stages of cytokinesis. Plays a role in endosomal sorting/trafficking of EGF receptor. In Rattus norvegicus (Rat), this protein is Charged multivesicular body protein 3 (Chmp3).